The sequence spans 510 residues: Leucine-rich repeat-containing protein 53 (510 aa).

LRR repeat units lie at residues 34-55, 58-79, 82-102, 108-129, 132-153, 158-179, and 182-203; these read TTRVLIITDGYLSSIESTNLSL, NLALLSLSRNGIEDVQEDALDG, MLRTLLLEHNQISSSSLTDHT, SLQVLVLSNNALRTLRGSWFRN, GLTRLQLDGNQITNLTDSSFGG, SLRHLDLSNNFISYIGKDAFRP, and QLQEVDLSRNRLAHMPDVFTPL. The 58-residue stretch at 214–271 folds into the LRRCT domain; the sequence is NQWSCTCDLHPLARFLRNYIKSSAHTLRNAKDLNCQPSTAAVAAAQSVLRLSETNCDP. Residues 294–314 form a helical membrane-spanning segment; the sequence is LLTVLGFAGAVGLTCLGLVVF.

Its subcellular location is the membrane. The sequence is that of Leucine-rich repeat-containing protein 53 (LRRC53) from Macaca fascicularis (Crab-eating macaque).